We begin with the raw amino-acid sequence, 277 residues long: MSSLEIIVDKILKFLEKQPKPEGRPFILGISGPQGSGKSTLASALDTELTRKNESVVKFSLDDFYLTHAEQVELAKNNPNNPLVQHRGLAGTHDVTFLNNVLNAFVKGSDEEVSIPFYDKSKFGGYGDRGDESQWKKANPKTTTYVIFEGWMVGFEPLDSCMLSVRARSTRWQNIEGSLLWVNRKLADYQPIFQKIDSLVELEAQEINYVYRWRLQQEHALKARIHKGMSDEEVIEFVNHYMPQYVFYLGTLSNKVHLNPHCLEIILDENRYPVVMH.

32 to 39 (GPQGSGKS) contacts ATP.

Belongs to the GLYK kinase family.

The protein localises to the cytoplasm. The protein resides in the nucleus. In terms of biological role, has a role in meiosis. This is an uncharacterized protein from Schizosaccharomyces pombe (strain 972 / ATCC 24843) (Fission yeast).